We begin with the raw amino-acid sequence, 111 residues long: Class I hydrophobin SC4 (111 aa).

A signal peptide spans 1–25; the sequence is MRFSLALLALPALAAAAPVPGGGKG. 4 disulfides stabilise this stretch: C30-C37, C38-C72, C86-C92, and C93-C106. An N-linked (GlcNAc...) asparagine glycan is attached at N39.

This sequence belongs to the fungal hydrophobin family. As to quaternary structure, self-assembles to form functional amyloid fibrils called rodlets. Self-assembly into fibrillar rodlets occurs spontaneously at hydrophobic:hydrophilic interfaces and the rodlets further associate laterally to form amphipathic monolayers.

Its subcellular location is the secreted. It is found in the cell wall. In terms of biological role, aerial growth, conidiation, and dispersal of filamentous fungi in the environment rely upon a capability of their secreting small amphipathic proteins called hydrophobins (HPBs) with low sequence identity. Class I can self-assemble into an outermost layer of rodlet bundles on aerial cell surfaces, conferring cellular hydrophobicity that supports fungal growth, development and dispersal; whereas Class II form highly ordered films at water-air interfaces through intermolecular interactions but contribute nothing to the rodlet structure. SC4 is a dikaryon-specific class I hydrophobin that contributes to the formation of aerial hyphae and fruiting bodies. Plays a role within fruiting bodies by preventing gas channels filling with water under wet conditions, probably serving uninterrupted gas exchange. SC4 cannot fully substitute for SC3. Involved in the unusual characteristic of mounds to adhere to and completely envelop adjacent fruiting bodies on mosaic colonies. In Schizophyllum commune (Split gill fungus), this protein is Class I hydrophobin SC4.